The chain runs to 484 residues: Malonate-semialdehyde dehydrogenase 1 (484 aa).

5 residues coordinate NAD(+): phenylalanine 154, lysine 178, glutamate 181, arginine 182, and serine 231. Cysteine 286 (nucleophile) is an active-site residue. Residue glutamate 384 coordinates NAD(+).

This sequence belongs to the aldehyde dehydrogenase family. IolA subfamily. As to quaternary structure, homotetramer.

It carries out the reaction 3-oxopropanoate + NAD(+) + CoA + H2O = hydrogencarbonate + acetyl-CoA + NADH + H(+). The catalysed reaction is 2-methyl-3-oxopropanoate + NAD(+) + CoA + H2O = propanoyl-CoA + hydrogencarbonate + NADH + H(+). It functions in the pathway polyol metabolism; myo-inositol degradation into acetyl-CoA; acetyl-CoA from myo-inositol: step 7/7. Its function is as follows. Catalyzes the oxidation of malonate semialdehyde (MSA) and methylmalonate semialdehyde (MMSA) into acetyl-CoA and propanoyl-CoA, respectively. Is involved in a myo-inositol catabolic pathway. Bicarbonate, and not CO2, is the end-product of the enzymatic reaction. This Bacillus licheniformis (strain ATCC 14580 / DSM 13 / JCM 2505 / CCUG 7422 / NBRC 12200 / NCIMB 9375 / NCTC 10341 / NRRL NRS-1264 / Gibson 46) protein is Malonate-semialdehyde dehydrogenase 1.